The following is a 438-amino-acid chain: 23S rRNA (uracil(1939)-C(5))-methyltransferase RlmD (438 aa).

Residues 10-69 enclose the TRAM domain; sequence KASVNTKHQSVDVVRLDHNGAGIAFVDKKPVFIEGALPGEKAIIQFIEQKKQFSRAKLIK. Residues Cys82, Cys88, Cys91, and Cys169 each coordinate [4Fe-4S] cluster. S-adenosyl-L-methionine is bound by residues Gln272, Phe301, Asn306, Glu322, Asn349, and Asp370. Cys396 acts as the Nucleophile in catalysis.

This sequence belongs to the class I-like SAM-binding methyltransferase superfamily. RNA M5U methyltransferase family. RlmD subfamily.

The enzyme catalyses uridine(1939) in 23S rRNA + S-adenosyl-L-methionine = 5-methyluridine(1939) in 23S rRNA + S-adenosyl-L-homocysteine + H(+). Functionally, catalyzes the formation of 5-methyl-uridine at position 1939 (m5U1939) in 23S rRNA. This chain is 23S rRNA (uracil(1939)-C(5))-methyltransferase RlmD, found in Aliivibrio fischeri (strain ATCC 700601 / ES114) (Vibrio fischeri).